Consider the following 277-residue polypeptide: Inositol monophosphatase 1 (277 aa).

Residues Glu-70, Asp-90, Ile-92, and Asp-93 each contribute to the Mg(2+) site. Glu-70 is a binding site for substrate. 92–95 is a substrate binding site; that stretch reads IDGT. Position 168 is a phosphothreonine (Thr-168). Substrate is bound by residues 194 to 196, Glu-213, and Asp-220; that span reads GTA. Asp-220 lines the Mg(2+) pocket.

Belongs to the inositol monophosphatase superfamily. As to quaternary structure, homodimer. Mg(2+) serves as cofactor.

Its subcellular location is the cytoplasm. The enzyme catalyses a myo-inositol phosphate + H2O = myo-inositol + phosphate. It carries out the reaction 1D-myo-inositol 1-phosphate + H2O = myo-inositol + phosphate. The catalysed reaction is 1D-myo-inositol 2-phosphate + H2O = myo-inositol + phosphate. It catalyses the reaction 1D-myo-inositol 3-phosphate + H2O = myo-inositol + phosphate. The enzyme catalyses 1D-myo-inositol 4-phosphate + H2O = myo-inositol + phosphate. It carries out the reaction 1D-myo-inositol 5-phosphate + H2O = myo-inositol + phosphate. The catalysed reaction is 1D-myo-inositol 6-phosphate + H2O = myo-inositol + phosphate. It catalyses the reaction scyllo-inositol 1-phosphate + H2O = scyllo-inositol + phosphate. The enzyme catalyses alpha-D-galactose 1-phosphate + H2O = D-galactose + phosphate. It carries out the reaction alpha-D-glucose 1-phosphate + H2O = D-glucose + phosphate. The catalysed reaction is D-glucose 6-phosphate + H2O = D-glucose + phosphate. It catalyses the reaction beta-D-fructose 1-phosphate + H2O = D-fructose + phosphate. The enzyme catalyses glycerol 2-phosphate + H2O = glycerol + phosphate. It carries out the reaction adenosine 2'-phosphate + H2O = adenosine + phosphate. The protein operates within polyol metabolism; myo-inositol biosynthesis; myo-inositol from D-glucose 6-phosphate: step 2/2. Its activity is regulated as follows. Inhibited by Li(+), Ca(2+) and Mn(2+), but also by Mg(2+) at concentrations above 3 mM. Its function is as follows. Phosphatase involved in the dephosphorylation of myo-inositol monophosphate to generate myo-inositol. Is also able to dephosphorylate scyllo-inositol-phosphate, myo-inositol 1,4-diphosphate, scyllo-inositol-1,3-diphosphate and scyllo-inositol-1,4-diphosphate. Also dephosphorylates in vitro other sugar-phosphates including D-galactose-1-phosphate, glucose-1-phosphate, glucose-6-phosphate, fructose-1-phosphate, beta-glycerophosphate and 2'-AMP. Responsible for the provision of inositol required for synthesis of phosphatidylinositol and polyphosphoinositides, and involved in maintaining normal brain function. Has been implicated as the pharmacological target for lithium Li(+) action in brain. The chain is Inositol monophosphatase 1 (IMPA1) from Pongo abelii (Sumatran orangutan).